Here is a 398-residue protein sequence, read N- to C-terminus: MRKKECIAMLLAGGQGSRLGCLTRNIPKPAVSFAGKYRIIDFSLSNCSNSNIDTVGVLTQYKPFALNTYINMGSAWDLNCLNGGIHILPPFVGEAQGSWYKGTANAIYQNMDFINFYNPEYILILSGDHIYQMDYYEMLSYHKQKHAEVTLSAIAVPWEEASRFGVMVTDAGGRIIRFEEKPPRPESNLASMGVYIFKWDVLKEALLEDEQDPQSDHDFGKNVLPRLLQQGRRLYSYLFHGYWRDVGTIESYYNANMEVLQEERVDKFFELKQRVFSNEEILAPQHLGERAKIHNSLIGNGCTILGEVRDSVIASGVYVGEGSLIEQSILLPNSEIYEDVRLHKTILGENAIVRAHCRIGDKREGNPPQEGITVIGDHLHIPEGTVISEGENVRKDTA.

Residues Tyr100, Gly165, 180 to 181, and Ser191 each bind alpha-D-glucose 1-phosphate; that span reads EK.

The protein belongs to the bacterial/plant glucose-1-phosphate adenylyltransferase family. As to quaternary structure, homotetramer.

It catalyses the reaction alpha-D-glucose 1-phosphate + ATP + H(+) = ADP-alpha-D-glucose + diphosphate. It functions in the pathway glycan biosynthesis; glycogen biosynthesis. Its function is as follows. Involved in the biosynthesis of ADP-glucose, a building block required for the elongation reactions to produce glycogen. Catalyzes the reaction between ATP and alpha-D-glucose 1-phosphate (G1P) to produce pyrophosphate and ADP-Glc. The protein is Glucose-1-phosphate adenylyltransferase of Desulfitobacterium hafniense (strain Y51).